The sequence spans 125 residues: Cu-Zn superoxide dismutase-like protein (125 aa).

Cysteine 52 and cysteine 102 are disulfide-bonded.

This sequence belongs to the Cu-Zn superoxide dismutase family.

The protein resides in the host cytoplasm. Virion protein with no enzymatic activity. The sequence is that of Cu-Zn superoxide dismutase-like protein from Mus musculus (Mouse).